A 345-amino-acid chain; its full sequence is N-acetyl-gamma-glutamyl-phosphate reductase (345 aa).

C149 is a catalytic residue.

The protein belongs to the NAGSA dehydrogenase family. Type 1 subfamily.

Its subcellular location is the cytoplasm. The catalysed reaction is N-acetyl-L-glutamate 5-semialdehyde + phosphate + NADP(+) = N-acetyl-L-glutamyl 5-phosphate + NADPH + H(+). It functions in the pathway amino-acid biosynthesis; L-arginine biosynthesis; N(2)-acetyl-L-ornithine from L-glutamate: step 3/4. Functionally, catalyzes the NADPH-dependent reduction of N-acetyl-5-glutamyl phosphate to yield N-acetyl-L-glutamate 5-semialdehyde. This chain is N-acetyl-gamma-glutamyl-phosphate reductase, found in Bacillus cereus (strain B4264).